The sequence spans 654 residues: Heat shock 70 kDa protein 2 (654 aa).

Positions 612 to 646 are enriched in gly residues; sequence AGGEGGAPGAGFPGAGGPGGFPGAGAGGAHSGGDD. The tract at residues 612–654 is disordered; it reads AGGEGGAPGAGFPGAGGPGGFPGAGAGGAHSGGDDGPTVEEVD.

The protein belongs to the heat shock protein 70 family.

This is Heat shock 70 kDa protein 2 (HSP70-2) from Paracoccidioides lutzii (strain ATCC MYA-826 / Pb01) (Paracoccidioides brasiliensis).